The sequence spans 274 residues: MSNTYQIYLISDSTGETLDRVFLAIKAQFKNIKYDVKSYFFTRTENQVSKIMDEAKKNDNAIILYTIVDTSLAKFLANKGDEKKIPCFSVLGNLIMNFSKLLNQKASHVPSGQHALNEEYYERIEAIQFTMAHDDGNLVEDVDKADLILLGVSRTSKTPTSIYLANRGYKTLNIPLVNEQSIPESLKKNPKLSCVVGLTTEPQRLVDIRKNRMNALKEKENTNYTNINKIEKEINEAKKTFIKYKWPTIDVTRKSVEETAASIIKIYEINKNNG.

151-158 (GVSRTSKT) contacts ADP.

It belongs to the pyruvate, phosphate/water dikinase regulatory protein family. PDRP subfamily.

It carries out the reaction N(tele)-phospho-L-histidyl/L-threonyl-[pyruvate, phosphate dikinase] + ADP = N(tele)-phospho-L-histidyl/O-phospho-L-threonyl-[pyruvate, phosphate dikinase] + AMP + H(+). The catalysed reaction is N(tele)-phospho-L-histidyl/O-phospho-L-threonyl-[pyruvate, phosphate dikinase] + phosphate + H(+) = N(tele)-phospho-L-histidyl/L-threonyl-[pyruvate, phosphate dikinase] + diphosphate. In terms of biological role, bifunctional serine/threonine kinase and phosphorylase involved in the regulation of the pyruvate, phosphate dikinase (PPDK) by catalyzing its phosphorylation/dephosphorylation. This Pelagibacter ubique (strain HTCC1062) protein is Putative pyruvate, phosphate dikinase regulatory protein.